The primary structure comprises 519 residues: Circadian clock oscillator protein KaiC (519 aa).

KaiC domains lie at 1 to 246 and 260 to 519; these read MSEK…VNIF and VRVS…GSDS. Gly48, Thr49, Gly50, Lys51, Thr52, Leu53, Lys223, Leu224, Arg225, Thr227, His229, Thr239, Thr289, Gly290, Thr291, Gly292, Lys293, Thr294, and Leu295 together coordinate ATP. Thr52 is a binding site for Mg(2+). Position 294 (Thr294) interacts with Mg(2+). Position 317 (Glu317) interacts with Mg(2+). ATP is bound at residue Trp330. At Ser430 the chain carries Phosphoserine; by autocatalysis. Thr431 bears the Phosphothreonine; by autocatalysis mark. ATP-binding residues include Arg450, Lys456, Met457, Arg458, Ser460, His462, and Lys464.

Belongs to the KaiC family. In terms of assembly, homohexamer; hexamerization is dependent on ATP-binding. The KaiABC complex composition changes during the circadian cycle to control KaiC phosphorylation. Complexes KaiC(6), KaiA(2-4):KaiC(6), KaiB(6):KaiC(6) and KaiC(6):KaiB(6):KaiA(12) are among the most important forms, many form cooperatively. KaiC interacts with SasA, activating its autokinase function and leading to RpaA activation. It depends on Mg(2+) as a cofactor. Post-translationally, phosphorylated on serine and threonine residues by autocatalysis. Has a 4 step phosphorylation cycle; the autokinase acts first on Thr-431, then Ser-430. When Ser-430 is modified KaiC switches to an autophosphatase mode, acting first on phospho-Thr-431 then phospho-Ser-430.

It catalyses the reaction L-seryl-[protein] + ATP = O-phospho-L-seryl-[protein] + ADP + H(+). It carries out the reaction L-threonyl-[protein] + ATP = O-phospho-L-threonyl-[protein] + ADP + H(+). The catalysed reaction is ATP + H2O = ADP + phosphate + H(+). Its activity is regulated as follows. The interaction with KaiA enhances its phosphorylation status, while the interaction with KaiB decreases it. Functionally, central component of the KaiABC oscillator complex, which constitutes the main circadian regulator in cyanobacteria. Complex composition changes during the circadian cycle to control KaiC phosphorylation. KaiA stimulates KaiC autophosphorylation, while KaiB sequesters KaiA, leading to KaiC autodephosphorylation. Clock output pathways impact the RpaA transcriptional regulator. KaiC enhances the autophosphorylation activity of SasA, which then transfers its phosphate group to RpaA to activate it. KaiB and KaiC together enhance the phospho-RpaA dephosphatase activity of CikA. Has a weak, temperature-independent ATPase activity; ATPase activity defines the circadian period. The phosphorylation state of KaiC modulates its ATPase activity and effects KaiB binding. This is Circadian clock oscillator protein KaiC from Nostoc sp. (strain PCC 7120 / SAG 25.82 / UTEX 2576).